The chain runs to 270 residues: NAD(P)H-hydrate epimerase (270 aa).

One can recognise a YjeF N-terminal domain in the interval 25-234 (FQQLMDLMQN…DLLAPEAIYQ (210 aa)). 73 to 77 (DNGGQ) is a (6S)-NADPHX binding site. K(+)-binding residues include N74 and D144. Residues 148-154 (GVGLYGH) and E177 each bind (6S)-NADPHX. T180 provides a ligand contact to K(+).

The protein belongs to the NnrE/AIBP family. K(+) serves as cofactor.

The catalysed reaction is (6R)-NADHX = (6S)-NADHX. The enzyme catalyses (6R)-NADPHX = (6S)-NADPHX. Catalyzes the epimerization of the S- and R-forms of NAD(P)HX, a damaged form of NAD(P)H that is a result of enzymatic or heat-dependent hydration. This is a prerequisite for the S-specific NAD(P)H-hydrate dehydratase to allow the repair of both epimers of NAD(P)HX. The sequence is that of NAD(P)H-hydrate epimerase from Legionella pneumophila (strain Corby).